A 472-amino-acid polypeptide reads, in one-letter code: Tryptophanase (472 aa).

K270 carries the post-translational modification N6-(pyridoxal phosphate)lysine.

Belongs to the beta-eliminating lyase family. Homotetramer. Pyridoxal 5'-phosphate serves as cofactor.

It carries out the reaction L-tryptophan + H2O = indole + pyruvate + NH4(+). Its pathway is amino-acid degradation; L-tryptophan degradation via pyruvate pathway; indole and pyruvate from L-tryptophan: step 1/1. This Haemophilus influenzae (strain 86-028NP) protein is Tryptophanase.